A 397-amino-acid chain; its full sequence is 4-hydroxyphenylpyruvate dioxygenase (397 aa).

VOC domains follow at residues 18 to 149 and 181 to 339; these read NFHH…FVEY and FIDH…IFTK. Residues histidine 184, histidine 267, and glutamate 350 each coordinate Fe cation.

This sequence belongs to the 4HPPD family. Homodimer. The cofactor is Fe cation.

The protein localises to the cytoplasm. It is found in the endoplasmic reticulum membrane. Its subcellular location is the golgi apparatus membrane. The catalysed reaction is 3-(4-hydroxyphenyl)pyruvate + O2 = homogentisate + CO2. The protein operates within amino-acid degradation; L-phenylalanine degradation; acetoacetate and fumarate from L-phenylalanine: step 3/6. Catalyzes the conversion of 4-hydroxyphenylpyruvic acid to homogentisic acid, one of the steps in tyrosine catabolism. The sequence is that of 4-hydroxyphenylpyruvate dioxygenase (hpd) from Danio rerio (Zebrafish).